The sequence spans 166 residues: 16S rRNA aminocarboxypropyltransferase (166 aa).

S-adenosyl-L-methionine is bound by residues T17, I62, L84, Y99, and S103.

It belongs to the TDD superfamily. TSR3 family.

It is found in the cytoplasm. It catalyses the reaction an N(1)-methylpseudouridine in rRNA + S-adenosyl-L-methionine = N(1)-methyl-N(3)-[(3S)-3-amino-3-carboxypropyl]pseudouridine in rRNA + S-methyl-5'-thioadenosine + H(+). Functionally, aminocarboxypropyltransferase that catalyzes the aminocarboxypropyl transfer on pseudouridine corresponding to position 914 in M.jannaschii 16S rRNA. It constitutes the last step in biosynthesis of the hypermodified N1-methyl-N3-(3-amino-3-carboxypropyl) pseudouridine (m1acp3-Psi). This is 16S rRNA aminocarboxypropyltransferase from Saccharolobus islandicus (strain Y.N.15.51 / Yellowstone #2) (Sulfolobus islandicus).